Consider the following 493-residue polypeptide: Transcript termination protein A18 (493 aa).

Residues 100–256 enclose the Helicase ATP-binding domain; sequence MIELKRPLYI…NSIINIAKLS (157 aa). 113 to 120 provides a ligand contact to ATP; that stretch reads LACGFGKT. The DESH box signature appears at 206-209; the sequence is DESH.

Belongs to the helicase family. Poxviruses subfamily. In terms of assembly, interacts with G2. Might be part of a transcription complex composed at least of G2, A18, and H5.

Its subcellular location is the virion. In terms of biological role, DNA helicase which seems to act as a postreplicative transcription termination factor. Involved in ATP-dependent release of nascent RNA. Forms a stable complex with single-stranded DNA, and to a lesser extent RNA. This chain is Transcript termination protein A18, found in Camelus.